We begin with the raw amino-acid sequence, 77 residues long: MKEQKWIHEGLITESLPNGMFRVRLDNEDLILGYVSGKIRRSFMRILPGDRVKVEVSRYDSTRGRIIYRLRNKDSKD.

Residues 1–71 enclose the S1-like domain; it reads MKEQKWIHEG…TRGRIIYRLR (71 aa).

This sequence belongs to the IF-1 family. In terms of assembly, component of the 30S ribosomal translation pre-initiation complex which assembles on the 30S ribosome in the order IF-2 and IF-3, IF-1 and N-formylmethionyl-tRNA(fMet); mRNA recruitment can occur at any time during PIC assembly.

The protein localises to the plastid. Its subcellular location is the chloroplast. Its function is as follows. One of the essential components for the initiation of protein synthesis. Stabilizes the binding of IF-2 and IF-3 on the 30S subunit to which N-formylmethionyl-tRNA(fMet) subsequently binds. Helps modulate mRNA selection, yielding the 30S pre-initiation complex (PIC). Upon addition of the 50S ribosomal subunit IF-1, IF-2 and IF-3 are released leaving the mature 70S translation initiation complex. The sequence is that of Translation initiation factor IF-1, chloroplastic from Garrya elliptica (Wavyleaf silktassel).